The chain runs to 138 residues: Phospholipase A2 EC1 (138 aa).

The signal sequence occupies residues 1-16; it reads MRTLWIVAVWLMSVEG. Cystine bridges form between C42-C131, C44-C60, C59-C111, C65-C138, C66-C104, C73-C97, and C91-C102. Ca(2+) contacts are provided by Y43, G45, and G47. Residue H63 is part of the active site. D64 is a Ca(2+) binding site. D105 is an active-site residue.

The protein belongs to the phospholipase A2 family. Group II subfamily. The cofactor is Ca(2+).

The protein resides in the secreted. It carries out the reaction a 1,2-diacyl-sn-glycero-3-phosphocholine + H2O = a 1-acyl-sn-glycero-3-phosphocholine + a fatty acid + H(+). The chain is Phospholipase A2 EC1 from Echis coloratus (Carpet viper).